The sequence spans 355 residues: Putative beta-lactamase HcpE (355 aa).

An N-terminal signal peptide occupies residues 1-22 (MGVKFLKILVCGLFFWSLNAHL). TPR repeat units lie at residues 27–60 (DNSFLGVAEKAYKSGNYSKATSYFKKACNDGVSE), 63–96 (TQLGIIYENGQGTRIDYKKALEYYKTACQADDRE), 98–131 (CFGLGGLYDEGLGTTQNYQEAIDAYAKACVLKHP), 132–166 (ESCYNLGIIYDRKIKGNADQAVTYYQKSCNFDMAK), 202–240 (GQACRALGSLFENGDAGLDEDFEVAFDYLQKACGLNNSG), 245–275 (LGSMYMLGRYVKKDPQKAFNFFKQACDMGSA), 276–311 (VSCSRMGFMYSQGDAVPKDLRKALDNYERGCDMGDE), and 312–344 (VGCFALAGMYYNMKDKENAIMIYDKGCKLGMKQ). Cystine bridges form between Cys54/Cys62, Cys90/Cys98, Cys126/Cys134, Cys160/Cys168, Cys197/Cys205, Cys234/Cys242, Cys270/Cys278, Cys306/Cys314, and Cys338/Cys346.

It belongs to the hcp beta-lactamase family.

Its subcellular location is the secreted. The enzyme catalyses a beta-lactam + H2O = a substituted beta-amino acid. May hydrolyze 6-aminopenicillinic acid and 7-aminocephalosporanic acid (ACA) derivatives. This is Putative beta-lactamase HcpE (hcpE) from Helicobacter pylori (strain ATCC 700392 / 26695) (Campylobacter pylori).